A 388-amino-acid chain; its full sequence is Mitochondrial distribution and morphology protein 12 (388 aa).

Residues 1 to 388 form the SMP-LTD domain; that stretch reads MSLDINWSLL…VFPNFHTVAL (388 aa). Disordered stretches follow at residues 75–101 and 209–251; these read DDEG…RNEA and PMSI…SSSS. A compositionally biased stretch (basic and acidic residues) spans 83–101; the sequence is EEKQREKEREERDKLRNEA. The segment covering 234-243 has biased composition (pro residues); the sequence is PSPPAHPAGL.

The protein belongs to the MDM12 family. As to quaternary structure, component of the ER-mitochondria encounter structure (ERMES) or MDM complex, composed of MMM1, MDM10, MDM12 and MDM34. An MMM1 homodimer associates with one molecule of MDM12 on each side in a pairwise head-to-tail manner, and the SMP-LTD domains of MMM1 and MDM12 generate a continuous hydrophobic tunnel for phospholipid trafficking.

It is found in the mitochondrion outer membrane. It localises to the endoplasmic reticulum membrane. Functionally, component of the ERMES/MDM complex, which serves as a molecular tether to connect the endoplasmic reticulum (ER) and mitochondria. Components of this complex are involved in the control of mitochondrial shape and protein biogenesis, and function in nonvesicular lipid trafficking between the ER and mitochondria. MDM12 is required for the interaction of the ER-resident membrane protein MMM1 and the outer mitochondrial membrane-resident beta-barrel protein MDM10. The MDM12-MMM1 subcomplex functions in the major beta-barrel assembly pathway that is responsible for biogenesis of all mitochondrial outer membrane beta-barrel proteins, and acts in a late step after the SAM complex. The MDM10-MDM12-MMM1 subcomplex further acts in the TOM40-specific pathway after the action of the MDM12-MMM1 complex. Essential for establishing and maintaining the structure of mitochondria and maintenance of mtDNA nucleoids. This chain is Mitochondrial distribution and morphology protein 12, found in Cryptococcus neoformans var. neoformans serotype D (strain B-3501A) (Filobasidiella neoformans).